The chain runs to 271 residues: Undecaprenyl-diphosphatase (271 aa).

8 helical membrane-spanning segments follow: residues 5–25 (LLIKAFIMGIVEGLTEFLPIS), 43–63 (FATMFEIVIQLGAILAVVYYF), 80–100 (GFNLWYKTFIAFLPAAIIGIL), 109–129 (LFSPFTVAIALIVGAIMMIVI), 145–165 (VSTSKAFWIGVAQVMSLFPGM), 186–206 (AEFSFFLAIPTMLAATGFELV), 215–235 (LEWEALAVGFIMSFITALIVV), and 246–266 (VLKPFAYYRLLVGVLMLFLIA).

It belongs to the UppP family.

The protein resides in the cell membrane. The enzyme catalyses di-trans,octa-cis-undecaprenyl diphosphate + H2O = di-trans,octa-cis-undecaprenyl phosphate + phosphate + H(+). Catalyzes the dephosphorylation of undecaprenyl diphosphate (UPP). Confers resistance to bacitracin. The chain is Undecaprenyl-diphosphatase from Caldanaerobacter subterraneus subsp. tengcongensis (strain DSM 15242 / JCM 11007 / NBRC 100824 / MB4) (Thermoanaerobacter tengcongensis).